The chain runs to 443 residues: MVKERSTELVQGFRHSVPYINTHRGKTFVIMLGGEAIEHENFSSIVNDIGLLHSLGIRLVVVYGARPQIDANLAAHQHEPLYHKNIRVTDAKTLELVKQAAGTLQLDITARLSMSLNNTPLQGAHINVVSGNFIIAQPLGVDDGVDYCHSGRIRRIDEEAIHRQLDSGAIVLLGPVAVSVTGESFNLTSEEIATQLAIKLKAEKMIGFCSSQGVTNDDGDIVSELFPNEAQARVEAQETAGDYNSGTVRFLRGAVKACRSGVRRCHLISYQEDGALLQELFSRDGIGTQIVMESAEQIRRATINDIGGILELIRPLEQQGILVRRSREQLEMEIDKFTIIQRDNTTIACAALYPFPEEKIGEMACVAVHPDYRSSARGEVLLERIAAQAKQIGLSKLFVLTTRSIHWFQERGFTPVDIDLLPESKKLMYNYQRRSKVLMADLG.

An N-acetyltransferase domain is found at 296–434 (EQIRRATIND…KKLMYNYQRR (139 aa)).

Belongs to the acetyltransferase family. ArgA subfamily. In terms of assembly, homohexamer.

Its subcellular location is the cytoplasm. The enzyme catalyses L-glutamate + acetyl-CoA = N-acetyl-L-glutamate + CoA + H(+). Its pathway is amino-acid biosynthesis; L-arginine biosynthesis; N(2)-acetyl-L-ornithine from L-glutamate: step 1/4. In Escherichia fergusonii (strain ATCC 35469 / DSM 13698 / CCUG 18766 / IAM 14443 / JCM 21226 / LMG 7866 / NBRC 102419 / NCTC 12128 / CDC 0568-73), this protein is Amino-acid acetyltransferase.